The chain runs to 341 residues: L-threonine 3-dehydrogenase (341 aa).

A Zn(2+)-binding site is contributed by C38. Residues T40 and H43 each act as charge relay system in the active site. Residues H63, E64, C93, C96, C99, and C107 each coordinate Zn(2+). Residues I175, D195, R200, 262–264, and 286–287 contribute to the NAD(+) site; these read LGI and IY.

Belongs to the zinc-containing alcohol dehydrogenase family. As to quaternary structure, homotetramer. Zn(2+) is required as a cofactor.

It localises to the cytoplasm. The catalysed reaction is L-threonine + NAD(+) = (2S)-2-amino-3-oxobutanoate + NADH + H(+). It participates in amino-acid degradation; L-threonine degradation via oxydo-reductase pathway; glycine from L-threonine: step 1/2. Catalyzes the NAD(+)-dependent oxidation of L-threonine to 2-amino-3-ketobutyrate. This chain is L-threonine 3-dehydrogenase, found in Shewanella putrefaciens (strain CN-32 / ATCC BAA-453).